A 430-amino-acid polypeptide reads, in one-letter code: Type II methyltransferase M.Sau96I (430 aa).

The region spanning 9–63 is the HTH cro/C1-type domain; the sequence is IEKMKNQNIKTQTELAEKIDISKSQLSFMFSDEYEPLKKNVIKLADVLKVSPNDI. The region spanning 99 to 429 is the SAM-dependent MTase C5-type domain; sequence YNVFETFAGA…KSLVHYLNQF (331 aa). Residue C174 is part of the active site.

This sequence belongs to the class I-like SAM-binding methyltransferase superfamily. C5-methyltransferase family.

It catalyses the reaction a 2'-deoxycytidine in DNA + S-adenosyl-L-methionine = a 5-methyl-2'-deoxycytidine in DNA + S-adenosyl-L-homocysteine + H(+). Its function is as follows. A methylase that recognizes the double-stranded sequence 5'-GGNCC-3', methylates C-4 on both strands, and protects the DNA from cleavage by the Sau96I endonuclease. The chain is Type II methyltransferase M.Sau96I from Staphylococcus aureus.